Consider the following 213-residue polypeptide: 3-demethoxyubiquinol 3-hydroxylase (213 aa).

E62, E92, H95, E144, E176, and H179 together coordinate Fe cation.

This sequence belongs to the COQ7 family. Fe cation serves as cofactor.

The protein resides in the cell membrane. The catalysed reaction is a 5-methoxy-2-methyl-3-(all-trans-polyprenyl)benzene-1,4-diol + AH2 + O2 = a 3-demethylubiquinol + A + H2O. The protein operates within cofactor biosynthesis; ubiquinone biosynthesis. Functionally, catalyzes the hydroxylation of 2-nonaprenyl-3-methyl-6-methoxy-1,4-benzoquinol during ubiquinone biosynthesis. This chain is 3-demethoxyubiquinol 3-hydroxylase, found in Chromohalobacter salexigens (strain ATCC BAA-138 / DSM 3043 / CIP 106854 / NCIMB 13768 / 1H11).